A 279-amino-acid polypeptide reads, in one-letter code: Digeranylgeranylglyceryl phosphate synthase (279 aa).

Transmembrane regions (helical) follow at residues 16–36 (LIAG…LPPI), 40–60 (LLIF…NDYF), 77–99 (GALS…ILIA), 104–121 (FEAF…YLYA), 124–144 (LKPQ…ITPI), 146–166 (GAIA…AFLV), 192–212 (IVWG…ATII), 220–240 (AGIG…LWAA), and 259–279 (LKIA…TKGV).

This sequence belongs to the UbiA prenyltransferase family. DGGGP synthase subfamily. Mg(2+) is required as a cofactor.

Its subcellular location is the cell membrane. It catalyses the reaction sn-3-O-(geranylgeranyl)glycerol 1-phosphate + (2E,6E,10E)-geranylgeranyl diphosphate = 2,3-bis-O-(geranylgeranyl)-sn-glycerol 1-phosphate + diphosphate. The protein operates within membrane lipid metabolism; glycerophospholipid metabolism. Prenyltransferase that catalyzes the transfer of the geranylgeranyl moiety of geranylgeranyl diphosphate (GGPP) to the C2 hydroxyl of (S)-3-O-geranylgeranylglyceryl phosphate (GGGP). This reaction is the second ether-bond-formation step in the biosynthesis of archaeal membrane lipids. This is Digeranylgeranylglyceryl phosphate synthase from Thermococcus sibiricus (strain DSM 12597 / MM 739).